Here is a 134-residue protein sequence, read N- to C-terminus: Small ribosomal subunit protein uS11 (134 aa).

It belongs to the universal ribosomal protein uS11 family. In terms of assembly, part of the 30S ribosomal subunit. Interacts with proteins S7 and S18. Binds to IF-3.

Functionally, located on the platform of the 30S subunit, it bridges several disparate RNA helices of the 16S rRNA. Forms part of the Shine-Dalgarno cleft in the 70S ribosome. The chain is Small ribosomal subunit protein uS11 from Polaromonas sp. (strain JS666 / ATCC BAA-500).